The chain runs to 372 residues: DNA replication and repair protein RecF (372 aa).

Residue 30 to 37 (GENGQGKT) participates in ATP binding.

The protein belongs to the RecF family.

The protein resides in the cytoplasm. The RecF protein is involved in DNA metabolism; it is required for DNA replication and normal SOS inducibility. RecF binds preferentially to single-stranded, linear DNA. It also seems to bind ATP. The chain is DNA replication and repair protein RecF from Anaeromyxobacter dehalogenans (strain 2CP-C).